We begin with the raw amino-acid sequence, 367 residues long: Heme A synthase (367 aa).

Helical transmembrane passes span 26–46, 111–131, 139–159, 174–194, 212–232, 272–292, 305–325, and 327–347; these read IRGWLAVVLFALFALVLVGGA, LLARGIGVIFALPLFFFWVTG, LPLLAILALGGLQGFIGWWMV, LATHLTIACVIFAACMWIYRG, AAVIAIFSLFQIYLGAIVAGL, FVHRLGAYLLLALVLWHMIAA, SVLLFALVVVQAAIGITTLLL, and VPIGWGVLHQGGALVVLGFAI. His-274 contacts heme. A heme-binding site is contributed by His-335.

The protein belongs to the COX15/CtaA family. Type 2 subfamily. As to quaternary structure, interacts with CtaB. The cofactor is heme b.

Its subcellular location is the cell membrane. The enzyme catalyses Fe(II)-heme o + 2 A + H2O = Fe(II)-heme a + 2 AH2. The protein operates within porphyrin-containing compound metabolism; heme A biosynthesis; heme A from heme O: step 1/1. Its function is as follows. Catalyzes the conversion of heme O to heme A by two successive hydroxylations of the methyl group at C8. The first hydroxylation forms heme I, the second hydroxylation results in an unstable dihydroxymethyl group, which spontaneously dehydrates, resulting in the formyl group of heme A. The chain is Heme A synthase from Sinorhizobium medicae (strain WSM419) (Ensifer medicae).